Here is a 476-residue protein sequence, read N- to C-terminus: Cytosolic iron-sulfur assembly component 3 (476 aa).

At alanine 2 the chain carries N-acetylalanine. 8 residues coordinate [4Fe-4S] cluster: cysteine 24, cysteine 71, cysteine 74, cysteine 77, cysteine 190, cysteine 246, cysteine 395, and cysteine 399.

The protein belongs to the NARF family. In terms of assembly, external component of the CIA complex. In the CIA complex, interacts directly with CIAO1 and MMS19.

Its function is as follows. Component of the cytosolic iron-sulfur protein assembly (CIA) complex, a multiprotein complex that mediates the incorporation of iron-sulfur cluster into extramitochondrial Fe/S proteins. Seems to negatively regulate the level of HIF1A expression, although this effect could be indirect. This is Cytosolic iron-sulfur assembly component 3 from Bos taurus (Bovine).